Reading from the N-terminus, the 182-residue chain is Peptidyl-tRNA hydrolase (182 aa).

A tRNA-binding site is contributed by tyrosine 14. The active-site Proton acceptor is histidine 19. 3 residues coordinate tRNA: phenylalanine 64, asparagine 66, and asparagine 112.

The protein belongs to the PTH family. In terms of assembly, monomer.

Its subcellular location is the cytoplasm. It catalyses the reaction an N-acyl-L-alpha-aminoacyl-tRNA + H2O = an N-acyl-L-amino acid + a tRNA + H(+). In terms of biological role, hydrolyzes ribosome-free peptidyl-tRNAs (with 1 or more amino acids incorporated), which drop off the ribosome during protein synthesis, or as a result of ribosome stalling. Catalyzes the release of premature peptidyl moieties from peptidyl-tRNA molecules trapped in stalled 50S ribosomal subunits, and thus maintains levels of free tRNAs and 50S ribosomes. The protein is Peptidyl-tRNA hydrolase of Wolbachia pipientis wMel.